Here is a 203-residue protein sequence, read N- to C-terminus: N-(5'-phosphoribosyl)anthranilate isomerase (203 aa).

Belongs to the TrpF family.

It carries out the reaction N-(5-phospho-beta-D-ribosyl)anthranilate = 1-(2-carboxyphenylamino)-1-deoxy-D-ribulose 5-phosphate. It functions in the pathway amino-acid biosynthesis; L-tryptophan biosynthesis; L-tryptophan from chorismate: step 3/5. This Sulfurihydrogenibium sp. (strain YO3AOP1) protein is N-(5'-phosphoribosyl)anthranilate isomerase.